A 537-amino-acid polypeptide reads, in one-letter code: CTP synthase (537 aa).

The tract at residues 1–269 (MNQTKYIFVT…DVVALKKLDL (269 aa)) is amidoligase domain. Ser15 provides a ligand contact to CTP. Ser15 contacts UTP. 16 to 21 (SLGKGI) lines the ATP pocket. Tyr56 is a binding site for L-glutamine. Asp73 contributes to the ATP binding site. The Mg(2+) site is built by Asp73 and Glu143. CTP contacts are provided by residues 150 to 152 (DIE), 190 to 195 (KTKPTQ), and Lys226. UTP-binding positions include 190–195 (KTKPTQ) and Lys226. Positions 295-537 (NIGLVGKYVE…VAAAVNAHKK (243 aa)) constitute a Glutamine amidotransferase type-1 domain. Gly357 lines the L-glutamine pocket. Cys384 functions as the Nucleophile; for glutamine hydrolysis in the catalytic mechanism. Residues 385-388 (LGMQ), Glu408, and Arg465 contribute to the L-glutamine site. Active-site residues include His510 and Glu512.

This sequence belongs to the CTP synthase family. As to quaternary structure, homotetramer.

The catalysed reaction is UTP + L-glutamine + ATP + H2O = CTP + L-glutamate + ADP + phosphate + 2 H(+). It catalyses the reaction L-glutamine + H2O = L-glutamate + NH4(+). It carries out the reaction UTP + NH4(+) + ATP = CTP + ADP + phosphate + 2 H(+). Its pathway is pyrimidine metabolism; CTP biosynthesis via de novo pathway; CTP from UDP: step 2/2. Its activity is regulated as follows. Allosterically activated by GTP, when glutamine is the substrate; GTP has no effect on the reaction when ammonia is the substrate. The allosteric effector GTP functions by stabilizing the protein conformation that binds the tetrahedral intermediate(s) formed during glutamine hydrolysis. Inhibited by the product CTP, via allosteric rather than competitive inhibition. In terms of biological role, catalyzes the ATP-dependent amination of UTP to CTP with either L-glutamine or ammonia as the source of nitrogen. Regulates intracellular CTP levels through interactions with the four ribonucleotide triphosphates. The chain is CTP synthase from Flavobacterium johnsoniae (strain ATCC 17061 / DSM 2064 / JCM 8514 / BCRC 14874 / CCUG 350202 / NBRC 14942 / NCIMB 11054 / UW101) (Cytophaga johnsonae).